The chain runs to 240 residues: Epoxyqueuosine reductase QueH (240 aa).

4 residues coordinate [4Fe-4S] cluster: C43, C44, C129, and C132. An intrachain disulfide couples C211 to C213.

Belongs to the QueH family.

It catalyses the reaction epoxyqueuosine(34) in tRNA + AH2 = queuosine(34) in tRNA + A + H2O. It functions in the pathway tRNA modification; tRNA-queuosine biosynthesis. In terms of biological role, catalyzes the conversion of epoxyqueuosine (oQ) to queuosine (Q), which is a hypermodified base found in the wobble positions of tRNA(Asp), tRNA(Asn), tRNA(His) and tRNA(Tyr). This Staphylococcus aureus (strain Mu50 / ATCC 700699) protein is Epoxyqueuosine reductase QueH.